The following is a 324-amino-acid chain: dITP/XTP pyrophosphatase (324 aa).

The unknown stretch occupies residues 1–126 (MTKSIFEYKD…SDNKSDFGDV (126 aa)). Positions 127 to 324 (LLIATRNEGK…EVFPAWQNKQ (198 aa)) are NTP pyrophosphatase. 131–136 (TRNEGK) lines the substrate pocket. Catalysis depends on aspartate 193, which acts as the Proton acceptor. Position 193 (aspartate 193) interacts with Mg(2+). Residues serine 194, 277–280 (FGYD), lysine 300, and 305–306 (HR) contribute to the substrate site.

The protein belongs to the HAM1 NTPase family. Homodimer. Requires Mg(2+) as cofactor.

The enzyme catalyses XTP + H2O = XMP + diphosphate + H(+). It carries out the reaction dITP + H2O = dIMP + diphosphate + H(+). It catalyses the reaction ITP + H2O = IMP + diphosphate + H(+). Functionally, pyrophosphatase that catalyzes the hydrolysis of nucleoside triphosphates to their monophosphate derivatives, with a high preference for the non-canonical purine nucleotides XTP (xanthosine triphosphate), dITP (deoxyinosine triphosphate) and ITP. Seems to function as a house-cleaning enzyme that removes non-canonical purine nucleotides from the nucleotide pool, thus preventing their incorporation into DNA/RNA and avoiding chromosomal lesions. The sequence is that of dITP/XTP pyrophosphatase from Streptococcus thermophilus (strain CNRZ 1066).